Consider the following 295-residue polypeptide: Inositol monophosphatase 1 (295 aa).

Residues Glu-73, Asp-92, Ile-94, Asp-95, and Asp-231 each coordinate Mg(2+). Glu-73 serves as a coordination point for substrate. Substrate is bound by residues 94–97 (IDGT) and Asp-231.

The protein belongs to the inositol monophosphatase superfamily. Mg(2+) serves as cofactor.

It localises to the cytoplasm. Its subcellular location is the nucleus. The catalysed reaction is a myo-inositol phosphate + H2O = myo-inositol + phosphate. The protein operates within polyol metabolism; myo-inositol biosynthesis; myo-inositol from D-glucose 6-phosphate: step 2/2. With respect to regulation, inhibited by Li(+) and Na(+). Its function is as follows. Responsible for the provision of inositol required for synthesis of phosphatidylinositol and polyphosphoinositides. The sequence is that of Inositol monophosphatase 1 (INM1) from Saccharomyces cerevisiae (strain ATCC 204508 / S288c) (Baker's yeast).